The sequence spans 796 residues: Peroxisome proliferator-activated receptor gamma coactivator 1-alpha (796 aa).

At K77 the chain carries N6-acetyllysine. The tract at residues 98–138 (PVDEDGLPSFDALTDGDVTTENEASPSSMPDGTPPPQEAEE) is disordered. The span at 114-127 (DVTTENEASPSSMP) shows a compositional bias: polar residues. The LXXLL motif signature appears at 142–146 (LKKLL). An N6-acetyllysine modification is found at K144. T176 bears the Phosphothreonine; by AMPK mark. K182 carries the post-translational modification N6-acetyllysine. Positions 211-275 (YLTTNDDPPH…NDPKGSPFEN (65 aa)) are disordered. Residues 217 to 235 (DPPHTKPTENRNSSRDKCT) are compositionally biased toward basic and acidic residues. Residues 242–258 (TQSQTQHLQAKPTTLSL) show a composition bias toward polar residues. 4 positions are modified to N6-acetyllysine: K252, K269, K276, and K319. Disordered stretches follow at residues 288 to 374 (GTAG…AKRP) and 398 to 452 (TSQE…RKQL). Residues 291–337 (GLTPPTTPPHKANQDNPFRASPKLKPSCKTVVPPPSKKARYSESSCT) form an interaction with PPARG region. Positions 332–344 (SESSCTQGSNSTK) are enriched in polar residues. K345 and K411 each carry N6-acetyllysine. The segment at 348-796 (EQSELYAQLS…LKEAQRSLRR (449 aa)) is mediates interaction with RNF34. Residues 401-412 (ELHDSRQLENKD) are compositionally biased toward basic and acidic residues. 2 stretches are compositionally biased toward polar residues: residues 413 to 428 (APSS…STDS) and 439 to 450 (VSRQVSPGSTRK). K450 is subject to N6-acetyllysine. The residue at position 538 (S538) is a Phosphoserine; by AMPK. Disordered stretches follow at residues 542–597 (FNSP…SSSR), 609–637 (HRTH…SYEE), and 648–667 (YRRE…ERQR). Basic residues predominate over residues 562 to 577 (QRMRSRSRSFSRHRSC). A compositionally biased stretch (low complexity) spans 578–597 (SRSPYSRSRSRSPGSRSSSR). Positions 675 to 751 (RVIYVGKIRP…TDFELYFCGR (77 aa)) constitute an RRM domain. An N6-acetyllysine mark is found at K756 and K777.

As to quaternary structure, homooligomer. Interacts with MYBBP1A; inhibits MYBBP1A transcriptional activation. Interacts with PRDM16, LPIN1 and PML. Interacts (via LXXLL motif) with RORA and RORC (via AF-2 motif); activates RORA and RORC transcriptional activation. Interacts with LRPPRC. Interacts with FOXO1. Interacts with NR5A2. Post-translationally, phosphorylation by AMPK in skeletal muscle increases activation of its own promoter. Phosphorylated by CLK2. Heavily acetylated by KAT2A/GCN5 under conditions of high nutrients, leading to inactivation of PPARGC1A. Deacetylated by SIRT1 in low nutrients/high NAD conditions, leading to its activation. In terms of processing, ubiquitinated. Ubiquitination by RNF34 induces proteasomal degradation.

It is found in the nucleus. It localises to the PML body. Its function is as follows. Transcriptional coactivator for steroid receptors and nuclear receptors. Greatly increases the transcriptional activity of PPARG and thyroid hormone receptor on the uncoupling protein promoter. Can regulate key mitochondrial genes that contribute to the program of adaptive thermogenesis. Plays an essential role in metabolic reprogramming in response to dietary availability through coordination of the expression of a wide array of genes involved in glucose and fatty acid metabolism. Acts as a key regulator of gluconeogenesis: stimulates hepatic gluconeogenesis by increasing the expression of gluconeogenic enzymes, and acting together with FOXO1 to promote the fasting gluconeogenic program. Induces the expression of PERM1 in the skeletal muscle in an ESRRA-dependent manner. Also involved in the integration of the circadian rhythms and energy metabolism. Required for oscillatory expression of clock genes, such as BMAL1 and NR1D1, through the coactivation of RORA and RORC, and metabolic genes, such as PDK4 and PEPCK. This Bos taurus (Bovine) protein is Peroxisome proliferator-activated receptor gamma coactivator 1-alpha (PPARGC1A).